Reading from the N-terminus, the 149-residue chain is SPbeta prophage-derived putative transcriptional regulator YosT (149 aa).

The protein is SPbeta prophage-derived putative transcriptional regulator YosT (yosT) of Bacillus subtilis (strain 168).